Consider the following 762-residue polypeptide: LON peptidase N-terminal domain and RING finger protein 1 (762 aa).

A disordered region spans residues 1–35 (MSSPAVARASPGGNREASGGPRSRNGPWEVGGGGE). One copy of the TPR 1 repeat lies at 47–80 (WELLLRRGELLALGGHLKGALEAFAAALRRGAPA). The RING-type 1 zinc finger occupies 118-154 (CLSCRGFLSEPVTVPCGHSYCRRCLRRELRARCRLCR). TPR repeat units lie at residues 201-233 (ARAAGRLGELLHEGRYREALAAACDALRAEPSD), 235-267 (TLKIYRAESYAGLQEFKAALEDLNAVLFQLPNW), and 268-301 (PEVYFRKGKVLQDAGFLGDALQLFLQCLALDEDF). At serine 420 the chain carries Phosphoserine. The RING-type 2 zinc finger occupies 468 to 506 (CSLCMRLFFEPVTTPCGHSFCKNCLERCLDHAPYCPLCK). In terms of domain architecture, Lon N-terminal spans 547–757 (TAELSHLTKN…KIQHILTYFS (211 aa)).

The polypeptide is LON peptidase N-terminal domain and RING finger protein 1 (Lonrf1) (Mus musculus (Mouse)).